The following is a 239-amino-acid chain: Guanylate kinase (239 aa).

The Guanylate kinase-like domain occupies 55-235 (GRIFVITGPS…TLAELQAILL (181 aa)). 62–69 (GPSGVGKS) contributes to the ATP binding site.

This sequence belongs to the guanylate kinase family.

The protein localises to the cytoplasm. It catalyses the reaction GMP + ATP = GDP + ADP. Its function is as follows. Essential for recycling GMP and indirectly, cGMP. This Mycoplasma pneumoniae (strain ATCC 29342 / M129 / Subtype 1) (Mycoplasmoides pneumoniae) protein is Guanylate kinase (gmk).